A 303-amino-acid chain; its full sequence is Pantothenate synthetase (303 aa).

A disordered region spans residues 1–21 (MIATGHGGAERRTTAGDGTAR). 48-55 (MGALHDGH) serves as a coordination point for ATP. The Proton donor role is filled by H55. Position 79 (Q79) interacts with (R)-pantoate. Q79 contributes to the beta-alanine binding site. 165–168 (GRKD) contacts ATP. Position 171 (Q171) interacts with (R)-pantoate. 202 to 205 (ASSR) is an ATP binding site.

The protein belongs to the pantothenate synthetase family. As to quaternary structure, homodimer.

The protein resides in the cytoplasm. The catalysed reaction is (R)-pantoate + beta-alanine + ATP = (R)-pantothenate + AMP + diphosphate + H(+). It participates in cofactor biosynthesis; (R)-pantothenate biosynthesis; (R)-pantothenate from (R)-pantoate and beta-alanine: step 1/1. In terms of biological role, catalyzes the condensation of pantoate with beta-alanine in an ATP-dependent reaction via a pantoyl-adenylate intermediate. The protein is Pantothenate synthetase of Acidothermus cellulolyticus (strain ATCC 43068 / DSM 8971 / 11B).